Reading from the N-terminus, the 177-residue chain is CDP-diacylglycerol--serine O-phosphatidyltransferase (177 aa).

Helical transmembrane passes span 4–24 (IPCM…HSLL), 28–48 (IHSA…DGMA), 77–97 (MLAY…CALT), 116–136 (LPTF…ILSF), and 140–160 (PILL…KIKF).

It belongs to the CDP-alcohol phosphatidyltransferase class-I family.

The protein localises to the cell membrane. The catalysed reaction is a CDP-1,2-diacyl-sn-glycerol + L-serine = a 1,2-diacyl-sn-glycero-3-phospho-L-serine + CMP + H(+). This is CDP-diacylglycerol--serine O-phosphatidyltransferase (pssA) from Bacillus subtilis (strain 168).